A 73-amino-acid polypeptide reads, in one-letter code: Cell division protein ZapB (73 aa).

Positions 3–67 form a coiled coil; that stretch reads LELLSKLETK…WNDKVTGLVG (65 aa).

Belongs to the ZapB family. Homodimer. The ends of the coiled-coil dimer bind to each other, forming polymers. Interacts with FtsZ.

It localises to the cytoplasm. Functionally, non-essential, abundant cell division factor that is required for proper Z-ring formation. It is recruited early to the divisome by direct interaction with FtsZ, stimulating Z-ring assembly and thereby promoting cell division earlier in the cell cycle. Its recruitment to the Z-ring requires functional FtsA or ZipA. This is Cell division protein ZapB from Shewanella sp. (strain ANA-3).